The chain runs to 124 residues: Small ribosomal subunit protein uS12 (124 aa).

The segment at 8–28 (IRSAREKTDKKTKSPALKSCP) is disordered. Positions 10-19 (SAREKTDKKT) are enriched in basic and acidic residues. Residue aspartate 89 is modified to 3-methylthioaspartic acid.

It belongs to the universal ribosomal protein uS12 family. In terms of assembly, part of the 30S ribosomal subunit. Contacts proteins S8 and S17. May interact with IF1 in the 30S initiation complex.

Functionally, with S4 and S5 plays an important role in translational accuracy. Interacts with and stabilizes bases of the 16S rRNA that are involved in tRNA selection in the A site and with the mRNA backbone. Located at the interface of the 30S and 50S subunits, it traverses the body of the 30S subunit contacting proteins on the other side and probably holding the rRNA structure together. The combined cluster of proteins S8, S12 and S17 appears to hold together the shoulder and platform of the 30S subunit. In Arthrospira platensis (Spirulina platensis), this protein is Small ribosomal subunit protein uS12.